Reading from the N-terminus, the 207-residue chain is Small ribosomal subunit protein uS4 (207 aa).

A disordered region spans residues 31 to 55 (KCKLDSKPGQHGRTSGARTSDYGTQ). The segment covering 42–53 (GRTSGARTSDYG) has biased composition (polar residues). Positions 97–160 (SRLDNVVYRM…KKQARIVEAL (64 aa)) constitute an S4 RNA-binding domain.

The protein belongs to the universal ribosomal protein uS4 family. As to quaternary structure, part of the 30S ribosomal subunit. Contacts protein S5. The interaction surface between S4 and S5 is involved in control of translational fidelity.

Its function is as follows. One of the primary rRNA binding proteins, it binds directly to 16S rRNA where it nucleates assembly of the body of the 30S subunit. Functionally, with S5 and S12 plays an important role in translational accuracy. This is Small ribosomal subunit protein uS4 from Burkholderia ambifaria (strain ATCC BAA-244 / DSM 16087 / CCUG 44356 / LMG 19182 / AMMD) (Burkholderia cepacia (strain AMMD)).